The following is a 300-amino-acid chain: Hemagglutinin 1 (300 aa).

Residues 200-221 (FIFATVVFIFLQAGRVPEIIAD) form a helical membrane-spanning segment.

The protein resides in the cell membrane. Induces agglutination of neuraminidase-treated erythrocytes. The sequence is that of Hemagglutinin 1 (hag1) from Eikenella corrodens.